A 185-amino-acid chain; its full sequence is Small ribosomal subunit protein uS4 (185 aa).

The 63-residue stretch at 108-170 (RRLQTLVYRK…GKSPFVDASH (63 aa)) folds into the S4 RNA-binding domain.

Belongs to the universal ribosomal protein uS4 family. In terms of assembly, part of the 30S ribosomal subunit. Contacts protein S5. The interaction surface between S4 and S5 is involved in control of translational fidelity.

Functionally, one of the primary rRNA binding proteins, it binds directly to 16S rRNA where it nucleates assembly of the body of the 30S subunit. Its function is as follows. With S5 and S12 plays an important role in translational accuracy. The polypeptide is Small ribosomal subunit protein uS4 (Methanoregula boonei (strain DSM 21154 / JCM 14090 / 6A8)).